The sequence spans 247 residues: tRNA pseudouridine synthase A (247 aa).

The active-site Nucleophile is aspartate 52. Residue tyrosine 113 participates in substrate binding.

Belongs to the tRNA pseudouridine synthase TruA family. Homodimer.

The catalysed reaction is uridine(38/39/40) in tRNA = pseudouridine(38/39/40) in tRNA. In terms of biological role, formation of pseudouridine at positions 38, 39 and 40 in the anticodon stem and loop of transfer RNAs. The polypeptide is tRNA pseudouridine synthase A (Bartonella quintana (strain Toulouse) (Rochalimaea quintana)).